The sequence spans 66 residues: MKKDIHPNYVECTVACACGNTFKTRSNKPEIKVDVCSKCHPFFTGSEKIVDSAGRVEKFNKKYGRK.

The Zn(2+) site is built by cysteine 16, cysteine 18, cysteine 36, and cysteine 39.

It belongs to the bacterial ribosomal protein bL31 family. Type A subfamily. Part of the 50S ribosomal subunit. The cofactor is Zn(2+).

Functionally, binds the 23S rRNA. The polypeptide is Large ribosomal subunit protein bL31 (Campylobacter hominis (strain ATCC BAA-381 / DSM 21671 / CCUG 45161 / LMG 19568 / NCTC 13146 / CH001A)).